A 271-amino-acid polypeptide reads, in one-letter code: Phosphoglycerate mutase-like protein (271 aa).

H22 (tele-phosphohistidine intermediate) is an active-site residue. The active-site Proton donor/acceptor is E134. The tract at residues 252-271 is disordered; the sequence is SAETTNYPGKVPEGLDNPSG.

This sequence belongs to the phosphoglycerate mutase family. Expressed in the shoot apical meristem and meristematic zone of the root tips.

In terms of biological role, may play a role in carbohydrates metabolism. The sequence is that of Phosphoglycerate mutase-like protein from Arabidopsis thaliana (Mouse-ear cress).